The following is a 254-amino-acid chain: 3-deoxy-manno-octulosonate cytidylyltransferase (254 aa).

The protein belongs to the KdsB family.

It localises to the cytoplasm. The enzyme catalyses 3-deoxy-alpha-D-manno-oct-2-ulosonate + CTP = CMP-3-deoxy-beta-D-manno-octulosonate + diphosphate. Its pathway is nucleotide-sugar biosynthesis; CMP-3-deoxy-D-manno-octulosonate biosynthesis; CMP-3-deoxy-D-manno-octulosonate from 3-deoxy-D-manno-octulosonate and CTP: step 1/1. It functions in the pathway bacterial outer membrane biogenesis; lipopolysaccharide biosynthesis. Functionally, activates KDO (a required 8-carbon sugar) for incorporation into bacterial lipopolysaccharide in Gram-negative bacteria. The chain is 3-deoxy-manno-octulosonate cytidylyltransferase from Pseudomonas paraeruginosa (strain DSM 24068 / PA7) (Pseudomonas aeruginosa (strain PA7)).